A 65-amino-acid polypeptide reads, in one-letter code: Small, acid-soluble spore protein 2 (65 aa).

It belongs to the alpha/beta-type SASP family.

In terms of biological role, SASP are bound to spore DNA. They are double-stranded DNA-binding proteins that cause DNA to change to an a-like conformation. They protect the DNA backbone from chemical and enzymatic cleavage and are thus involved in dormant spore's high resistance to UV light. This is Small, acid-soluble spore protein 2 (sasP-2) from Bacillus cereus.